Consider the following 21-residue polypeptide: Fibrinogen beta chain (21 aa).

Gln-1 is subject to Pyrrolidone carboxylic acid. A compositionally biased stretch (acidic residues) spans 1-11 (QHSTDYDEVED). The tract at residues 1–21 (QHSTDYDEVEDDRAKLHLDAR) is disordered. The O-linked (GalNAc...) threonine glycan is linked to Thr-4. Tyr-6 carries the sulfotyrosine modification. Basic and acidic residues predominate over residues 12–21 (DRAKLHLDAR).

Heterohexamer; disulfide linked. Contains 2 sets of 3 non-identical chains (alpha, beta and gamma). The 2 heterotrimers are in head to head conformation with the N-termini in a small central domain. Conversion of fibrinogen to fibrin is triggered by thrombin, which cleaves fibrinopeptides A and B from alpha and beta chains, and thus exposes the N-terminal polymerization sites responsible for the formation of the soft clot.

The protein localises to the secreted. In terms of biological role, cleaved by the protease thrombin to yield monomers which, together with fibrinogen alpha (FGA) and fibrinogen gamma (FGG), polymerize to form an insoluble fibrin matrix. Fibrin has a major function in hemostasis as one of the primary components of blood clots. In addition, functions during the early stages of wound repair to stabilize the lesion and guide cell migration during re-epithelialization. Was originally thought to be essential for platelet aggregation, based on in vitro studies using anticoagulated blood. However subsequent studies have shown that it is not absolutely required for thrombus formation in vivo. Enhances expression of SELP in activated platelets. Maternal fibrinogen is essential for successful pregnancy. Fibrin deposition is also associated with infection, where it protects against IFNG-mediated hemorrhage. May also facilitate the antibacterial immune response via both innate and T-cell mediated pathways. This is Fibrinogen beta chain (FGB) from Muntiacus muntjak (Barking deer).